We begin with the raw amino-acid sequence, 134 residues long: Small ribosomal subunit protein uS11 (134 aa).

2 disordered regions span residues 1–22 and 114–134; these read MPPK…KNVA and SIQD…RRRV. Basic residues predominate over residues 9–22; sequence AAKKVRRKEKKNVA.

The protein belongs to the universal ribosomal protein uS11 family. As to quaternary structure, part of the 30S ribosomal subunit. Interacts with proteins S7 and S18. Binds to IF-3.

Its function is as follows. Located on the platform of the 30S subunit, it bridges several disparate RNA helices of the 16S rRNA. Forms part of the Shine-Dalgarno cleft in the 70S ribosome. In Streptomyces coelicolor (strain ATCC BAA-471 / A3(2) / M145), this protein is Small ribosomal subunit protein uS11.